The primary structure comprises 64 residues: Putative H/ACA ribonucleoprotein complex subunit 3 (64 aa).

Belongs to the NOP10 family. In terms of assembly, component of the small nucleolar ribonucleoprotein particles containing H/ACA-type snoRNAs (H/ACA snoRNPs).

Its subcellular location is the nucleus. The protein resides in the nucleolus. Functionally, required for ribosome biogenesis. Part of a complex which catalyzes pseudouridylation of rRNA. This involves the isomerization of uridine such that the ribose is subsequently attached to C5, instead of the normal N1. Pseudouridine ('psi') residues may serve to stabilize the conformation of rRNAs. This is Putative H/ACA ribonucleoprotein complex subunit 3 (nola-3) from Caenorhabditis elegans.